Consider the following 1224-residue polypeptide: Potassium channel subfamily T member 1 (1224 aa).

Positions 1–37 (MARAKLPRSPSEGKAGPGDTPAGAAAPEEPHGLSPLL) are disordered. Topologically, residues 1 to 79 (MARAKLPRSP…LFFIKNQRSS (79 aa)) are cytoplasmic. The span at 13 to 27 (GKAGPGDTPAGAAAP) shows a compositional bias: low complexity. Residues 80-112 (LRIRLFNFSLKLLTCLLYIVRVLLDNPDQGIGC) form a helical membrane-spanning segment. At 113–139 (WGCTKYNYTFNGSSSEFHWAPILWVER) the chain is on the extracellular side. 2 N-linked (GlcNAc...) asparagine glycosylation sites follow: Asn119 and Asn123. The chain crosses the membrane as a helical span at residues 140 to 164 (KMALWVIQVIVATISFLETMLIIYL). At 165-178 (SYKGNIWEQIFHVS) the chain is on the cytoplasmic side. Residues 179 to 194 (FVLEMINTLPFIITVF) traverse the membrane as a helical segment. The Extracellular portion of the chain corresponds to 195-201 (WPPLRNL). A helical membrane pass occupies residues 202–219 (FIPVFLNCWLAKHALENM). Over 220–232 (INDFHRAILRTQS) the chain is Cytoplasmic. A helical membrane pass occupies residues 233–260 (AMFNQVLILFCTLLCLVFTGTCGIQHLE). Over 261–267 (RAGGNLN) the chain is Extracellular. The segment at residues 268 to 288 (LLTSFYFCIVTFSTVGFGDVT) is an intramembrane region (pore-forming). The K(+) site is built by Val282 and Gly283. The Extracellular portion of the chain corresponds to 289–290 (PK). A helical membrane pass occupies residues 291 to 324 (IWPSQLLVVILICVTLVVLPLQFEELVYLWMERQ). Residues 325-1224 (KSGGNYSRHR…NPETRDETQL (900 aa)) lie on the Cytoplasmic side of the membrane. An RCK N-terminal 1 domain is found at 338 to 474 (EKHVVLCVSS…FHVKFADHVV (137 aa)). Residues Leu499, His502, Ser524, and Asn526 each contribute to the Na(+) site. The segment at 644–675 (QNTDCRPSQGGSGGDGTKLTLPTENGSGSRRP) is disordered. A compositionally biased stretch (polar residues) spans 663 to 673 (TLPTENGSGSR). Residues Cys744 and Cys745 each contribute to the Zn(2+) site. 2 residues coordinate K(+): Arg747 and Lys750. Na(+)-binding residues include Arg747 and Lys750. Positions 752 and 754 each coordinate Zn(2+). K(+)-binding residues include Asn755, Tyr757, Tyr763, and Gly764. A Na(+)-binding site is contributed by Tyr757. Na(+) is bound at residue Phe765. The RCK N-terminal 2 domain maps to 767–907 (NKLIIVSAET…QFRAKDSYSL (141 aa)). Positions 773, 804, 806, 828, and 851 each coordinate K(+). Disordered regions lie at residues 1038–1066 (REAK…ADPV) and 1198–1224 (SSSQ…ETQL). Low complexity-rich tracts occupy residues 1045-1055 (GTRAASGSGST) and 1198-1215 (SSSQ…SSCN).

The protein belongs to the potassium channel family. Calcium-activated (TC 1.A.1.3) subfamily. KCa4.1/KCNT1 sub-subfamily. In terms of assembly, homotetramer; which constitutes the Na(+)-activated K(+) channel. Interacts with KCNT2; these heterodimer channels differ from the homomers in their unitary conductance, kinetic behavior, subcellular localization, and response to activation of protein kinase C. Interacts (via C-terminus) with FMR1; this interaction alters gating properties of KCNT1. Interacts with CRBN via its cytoplasmic C-terminus. Phosphorylated by protein kinase C. Phosphorylation of the C-terminal domain increases channel activity. Enriched in the brainstem and olfactory bulb and detected at significant levels in four different brain regions.

The protein localises to the cell membrane. The enzyme catalyses K(+)(in) = K(+)(out). Its activity is regulated as follows. Activated by high intracellular Na(+). In addition to activation by Na(+), is cooperatively activated by intracellular Cl(-) levels. Inhibited by Zn(2+). Activated upon stimulation of G-protein coupled receptors, such as CHRM1 and GRIA1. Sodium-activated K(+) channel. Acts as an important mediator of neuronal membrane excitability. Contributes to the delayed outward currents. Regulates neuronal bursting in sensory neurons. Contributes to synaptic development and plasticity. The protein is Potassium channel subfamily T member 1 (Kcnt1) of Mus musculus (Mouse).